A 106-amino-acid chain; its full sequence is Nucleoid-associated protein Nham_0463 (106 aa).

The protein belongs to the YbaB/EbfC family. Homodimer.

The protein resides in the cytoplasm. It localises to the nucleoid. In terms of biological role, binds to DNA and alters its conformation. May be involved in regulation of gene expression, nucleoid organization and DNA protection. This is Nucleoid-associated protein Nham_0463 from Nitrobacter hamburgensis (strain DSM 10229 / NCIMB 13809 / X14).